The chain runs to 314 residues: CD-NTase-associated protein 12 (314 aa).

The TIR domain maps to 5–129; the sequence is RIFIGSSSEE…VKGISLARFK (125 aa). An STING domain region spans residues 160-314; it reads SSTLAAVYYE…DLIKIVDEDN (155 aa). Residues F171, P234, and D252 each coordinate 3',3'-c-di-GMP.

It in the C-terminal section; belongs to the bacterial STING family. As to quaternary structure, homodimer. Forms homodimers; in the presence of c-di-GMP forms filaments with an ordered array of parallel-stacked subunits.

The catalysed reaction is NAD(+) + H2O = ADP-D-ribose + nicotinamide + H(+). With respect to regulation, NAD(+) hydrolase activity is strongly stimulated by c-di-GMP, weakly by 3'3'-cGAMP, very weakly by c-di-AMP but not at all by 2'3'-cGAMP. Self-association of TIR domains is required for NADase activity. Effector protein of a CBASS antiviral system with NAD(+) hydrolase activity. CBASS (cyclic oligonucleotide-based antiphage signaling system) provides immunity against bacteriophage. The CD-NTase protein synthesizes cyclic nucleotides in response to infection; these serve as specific second messenger signals. The signals activate a diverse range of effectors, leading to bacterial cell death and thus abortive phage infection. A type I-(GG) CBASS system. Its function is as follows. Binds c-di-GMP (synthesized by the cognate CdnE encoded upstream in the same operon), and about 10-fold less well 3'3'-cGAMP, but not c-di-AMP, 2'-3'-cGAMP or cUMP-AMP (tested without the N-terminal TIR domain). Upon activation by c-di-GMP forms filaments which hydrolyze NAD(+); filament formation is required for enzyme activation. The sequence is that of CD-NTase-associated protein 12 from Capnocytophaga granulosa (strain ATCC 51502 / DSM 11449 / JCM 8566 / LMG 16022 / NCTC 12948 / B0611).